The following is a 316-amino-acid chain: Acetyl-coenzyme A carboxylase carboxyl transferase subunit alpha (316 aa).

The CoA carboxyltransferase C-terminal domain occupies 40 to 293 (LEKRSRDALR…GDLIAKTMKE (254 aa)).

It belongs to the AccA family. As to quaternary structure, acetyl-CoA carboxylase is a heterohexamer composed of biotin carboxyl carrier protein (AccB), biotin carboxylase (AccC) and two subunits each of ACCase subunit alpha (AccA) and ACCase subunit beta (AccD).

It localises to the cytoplasm. The enzyme catalyses N(6)-carboxybiotinyl-L-lysyl-[protein] + acetyl-CoA = N(6)-biotinyl-L-lysyl-[protein] + malonyl-CoA. It functions in the pathway lipid metabolism; malonyl-CoA biosynthesis; malonyl-CoA from acetyl-CoA: step 1/1. Component of the acetyl coenzyme A carboxylase (ACC) complex. First, biotin carboxylase catalyzes the carboxylation of biotin on its carrier protein (BCCP) and then the CO(2) group is transferred by the carboxyltransferase to acetyl-CoA to form malonyl-CoA. This chain is Acetyl-coenzyme A carboxylase carboxyl transferase subunit alpha, found in Mesorhizobium japonicum (strain LMG 29417 / CECT 9101 / MAFF 303099) (Mesorhizobium loti (strain MAFF 303099)).